Reading from the N-terminus, the 673-residue chain is UvrABC system protein B (673 aa).

Positions 26 to 183 constitute a Helicase ATP-binding domain; the sequence is EGLEDGLAHQ…RRLAELQYTR (158 aa). Residue 39 to 46 coordinates ATP; that stretch reads GVTGSGKT. Residues 92–115 carry the Beta-hairpin motif; that stretch reads YYDYYQPEAYVPSSDTFIEKDASV. In terms of domain architecture, Helicase C-terminal spans 431-597; the sequence is QVDDLLSEIR…GLNKKVVDIL (167 aa). The region spanning 633–668 is the UVR domain; it reads QQKIHELEGQMMQHAQNLEFEEAAQIRDQLHQLREL.

The protein belongs to the UvrB family. As to quaternary structure, forms a heterotetramer with UvrA during the search for lesions. Interacts with UvrC in an incision complex.

The protein localises to the cytoplasm. The UvrABC repair system catalyzes the recognition and processing of DNA lesions. A damage recognition complex composed of 2 UvrA and 2 UvrB subunits scans DNA for abnormalities. Upon binding of the UvrA(2)B(2) complex to a putative damaged site, the DNA wraps around one UvrB monomer. DNA wrap is dependent on ATP binding by UvrB and probably causes local melting of the DNA helix, facilitating insertion of UvrB beta-hairpin between the DNA strands. Then UvrB probes one DNA strand for the presence of a lesion. If a lesion is found the UvrA subunits dissociate and the UvrB-DNA preincision complex is formed. This complex is subsequently bound by UvrC and the second UvrB is released. If no lesion is found, the DNA wraps around the other UvrB subunit that will check the other stand for damage. The sequence is that of UvrABC system protein B from Salmonella arizonae (strain ATCC BAA-731 / CDC346-86 / RSK2980).